Here is a 111-residue protein sequence, read N- to C-terminus: Inner membrane protein H108R (111 aa).

The helical transmembrane segment at 10 to 32 threads the bilayer; it reads LIVIITILITTRELSTTMLIVSL. Residue N65 is glycosylated (N-linked (GlcNAc...) asparagine; by host).

Belongs to the asfivirus H108R family.

It is found in the virion membrane. This is Inner membrane protein H108R from African swine fever virus (isolate Tick/Malawi/Lil 20-1/1983) (ASFV).